The following is a 319-amino-acid chain: Histidinol-phosphate aminotransferase 1 (319 aa).

At K182 the chain carries N6-(pyridoxal phosphate)lysine.

This sequence belongs to the class-II pyridoxal-phosphate-dependent aminotransferase family. Histidinol-phosphate aminotransferase subfamily. Requires pyridoxal 5'-phosphate as cofactor.

The catalysed reaction is L-histidinol phosphate + 2-oxoglutarate = 3-(imidazol-4-yl)-2-oxopropyl phosphate + L-glutamate. The protein operates within amino-acid biosynthesis; L-histidine biosynthesis; L-histidine from 5-phospho-alpha-D-ribose 1-diphosphate: step 7/9. This Archaeoglobus fulgidus (strain ATCC 49558 / DSM 4304 / JCM 9628 / NBRC 100126 / VC-16) protein is Histidinol-phosphate aminotransferase 1 (hisC1).